The chain runs to 169 residues: Peptide deformylase (169 aa).

2 residues coordinate Fe cation: Cys91 and His133. The active site involves Glu134. His137 serves as a coordination point for Fe cation.

It belongs to the polypeptide deformylase family. Fe(2+) serves as cofactor.

It carries out the reaction N-terminal N-formyl-L-methionyl-[peptide] + H2O = N-terminal L-methionyl-[peptide] + formate. Functionally, removes the formyl group from the N-terminal Met of newly synthesized proteins. Requires at least a dipeptide for an efficient rate of reaction. N-terminal L-methionine is a prerequisite for activity but the enzyme has broad specificity at other positions. The sequence is that of Peptide deformylase from Salmonella arizonae (strain ATCC BAA-731 / CDC346-86 / RSK2980).